Here is a 196-residue protein sequence, read N- to C-terminus: Beta-crystallin A4 (196 aa).

Residue Thr2 is modified to N-acetylthreonine. Positions 2–11 (TLQCTKSAGH) are N-terminal arm. 2 consecutive Beta/gamma crystallin 'Greek key' domains span residues 12–51 (WRVVVWDEEGFQGRRHEFTAECPSVLDLGFETVRSLKVLS) and 52–98 (GAWV…RPVA). Residues 99-104 (CANHRD) form a connecting peptide region. 2 consecutive Beta/gamma crystallin 'Greek key' domains span residues 105–146 (SRLT…HVQS) and 147–195 (GAWV…RRIQ).

As to quaternary structure, homo/heterodimer, or complexes of higher-order. The structure of beta-crystallin oligomers seems to be stabilized through interactions between the N-terminal arms.

In terms of biological role, crystallins are the dominant structural components of the vertebrate eye lens. In Rattus norvegicus (Rat), this protein is Beta-crystallin A4 (Cryba4).